A 385-amino-acid polypeptide reads, in one-letter code: UPF0284 protein PMT9312_0438 (385 aa).

The protein belongs to the UPF0284 family.

This is UPF0284 protein PMT9312_0438 from Prochlorococcus marinus (strain MIT 9312).